The primary structure comprises 291 residues: 4-hydroxy-tetrahydrodipicolinate synthase (291 aa).

Pyruvate is bound at residue Thr-45. The active-site Proton donor/acceptor is Tyr-133. Lys-161 serves as the catalytic Schiff-base intermediate with substrate. Pyruvate is bound at residue Ile-203.

It belongs to the DapA family. Homotetramer.

Its subcellular location is the cytoplasm. The enzyme catalyses L-aspartate 4-semialdehyde + pyruvate = (2S,4S)-4-hydroxy-2,3,4,5-tetrahydrodipicolinate + H2O + H(+). It participates in amino-acid biosynthesis; L-lysine biosynthesis via DAP pathway; (S)-tetrahydrodipicolinate from L-aspartate: step 3/4. Is allosterically feedback inhibited by lysine; the N.meningitidis enzyme is significantly more sensitive to lysine than the E.coli enzyme. Shows substrate inhibition by (S)-ASA, with a Ki of 1.7 mM. Its function is as follows. Catalyzes the condensation of (S)-aspartate-beta-semialdehyde [(S)-ASA] and pyruvate to 4-hydroxy-tetrahydrodipicolinate (HTPA). This Neisseria meningitidis serogroup B (strain ATCC BAA-335 / MC58) protein is 4-hydroxy-tetrahydrodipicolinate synthase.